Here is a 377-residue protein sequence, read N- to C-terminus: Succinyl-diaminopimelate desuccinylase (377 aa).

Residue histidine 67 participates in Zn(2+) binding. Aspartate 69 is an active-site residue. Aspartate 100 lines the Zn(2+) pocket. Glutamate 134 functions as the Proton acceptor in the catalytic mechanism. The Zn(2+) site is built by glutamate 135, glutamate 163, and histidine 349.

The protein belongs to the peptidase M20A family. DapE subfamily. In terms of assembly, homodimer. Requires Zn(2+) as cofactor. Co(2+) is required as a cofactor.

The enzyme catalyses N-succinyl-(2S,6S)-2,6-diaminopimelate + H2O = (2S,6S)-2,6-diaminopimelate + succinate. It functions in the pathway amino-acid biosynthesis; L-lysine biosynthesis via DAP pathway; LL-2,6-diaminopimelate from (S)-tetrahydrodipicolinate (succinylase route): step 3/3. In terms of biological role, catalyzes the hydrolysis of N-succinyl-L,L-diaminopimelic acid (SDAP), forming succinate and LL-2,6-diaminopimelate (DAP), an intermediate involved in the bacterial biosynthesis of lysine and meso-diaminopimelic acid, an essential component of bacterial cell walls. The protein is Succinyl-diaminopimelate desuccinylase of Haemophilus influenzae (strain PittEE).